Consider the following 822-residue polypeptide: Phenylalanine--tRNA ligase beta subunit (822 aa).

The region spanning 39 to 150 is the tRNA-binding domain; it reads ADRLVGFRTA…ETAPIGESYA (112 aa). The B5 domain maps to 399–502; the sequence is DWKRTARLRF…RLYGLDNVPA (104 aa). The Mg(2+) site is built by Asp486, Glu489, and Glu490. Residues 728-821 enclose the FDX-ACB domain; that stretch reads SPLQPVRRDF…VLKATGAVLR (94 aa).

Belongs to the phenylalanyl-tRNA synthetase beta subunit family. Type 1 subfamily. In terms of assembly, tetramer of two alpha and two beta subunits. The cofactor is Mg(2+).

The protein resides in the cytoplasm. It carries out the reaction tRNA(Phe) + L-phenylalanine + ATP = L-phenylalanyl-tRNA(Phe) + AMP + diphosphate + H(+). The chain is Phenylalanine--tRNA ligase beta subunit from Gluconobacter oxydans (strain 621H) (Gluconobacter suboxydans).